Here is a 408-residue protein sequence, read N- to C-terminus: DNA primase DnaG (408 aa).

Residues 165-243 enclose the Toprim domain; the sequence is PELIIVEGRA…KIDYVARAPT (79 aa). Mg(2+)-binding residues include Glu-171, Asp-216, and Asp-218.

Belongs to the archaeal DnaG primase family. As to quaternary structure, forms a ternary complex with MCM helicase and DNA. Component of the archaeal exosome complex. Mg(2+) is required as a cofactor.

It carries out the reaction ssDNA + n NTP = ssDNA/pppN(pN)n-1 hybrid + (n-1) diphosphate.. RNA polymerase that catalyzes the synthesis of short RNA molecules used as primers for DNA polymerase during DNA replication. Also part of the exosome, which is a complex involved in RNA degradation. Acts as a poly(A)-binding protein that enhances the interaction between heteromeric, adenine-rich transcripts and the exosome. This Sulfurisphaera tokodaii (strain DSM 16993 / JCM 10545 / NBRC 100140 / 7) (Sulfolobus tokodaii) protein is DNA primase DnaG.